The sequence spans 60 residues: Potassium channel toxin alpha-KTx 12.5 (60 aa).

A signal peptide spans 1–22; it reads MNKLPILIFMLLVCSMFISSDC. 3 cysteine pairs are disulfide-bonded: C30–C51, C36–C56, and C40–C58.

The protein belongs to the short scorpion toxin superfamily. Potassium channel inhibitor family. Alpha-KTx 12 subfamily. In terms of tissue distribution, expressed by the venom gland.

Its subcellular location is the secreted. In terms of biological role, this recombinant toxin inhibits the mammalian voltage-gated potassium channels Kv1.3/KCNA3 (IC(50)=28 nM). Kv1.1/KCNA1 and Kv1.2/KCNA2 potassium channels are also weakly inhibited (IC(50)=1.73 uM and IC(50)=12.63 uM, respectively). This chain is Potassium channel toxin alpha-KTx 12.5, found in Lychas mucronatus (Chinese swimming scorpion).